Reading from the N-terminus, the 48-residue chain is uncharacterized protein (48 aa).

This is an uncharacterized protein from Acidianus hospitalis (AFV-1).